The chain runs to 224 residues: MSKKTIVSMAVIRRLPRYHRYLEELLKNDVKRISSRELSEKMGVTASQIRQDLNNFGGFGQQGYGYNVEELYNNLTKILGLDKTYNTIIIGAGNLGQAIANYTSFEKSGFNLKGIFDINPRLFGLKIRDVEVMDIETVEDFIARNKIDIGILCIPKDNAQYTADRLVRAGIKAIWNFSPIDLKVPDDVILENVHLSDSLFTVSYRLNEEELFKKLKGETAKIDG.

Residues 17–56 (RYHRYLEELLKNDVKRISSRELSEKMGVTASQIRQDLNNF) constitute a DNA-binding region (H-T-H motif). Residue 91 to 96 (GAGNLG) participates in NAD(+) binding.

It belongs to the transcriptional regulatory Rex family. In terms of assembly, homodimer.

It localises to the cytoplasm. Functionally, modulates transcription in response to changes in cellular NADH/NAD(+) redox state. In Thermoanaerobacter sp. (strain X514), this protein is Redox-sensing transcriptional repressor Rex.